The following is a 127-amino-acid chain: Large ribosomal subunit protein bL17 (127 aa).

This sequence belongs to the bacterial ribosomal protein bL17 family. Part of the 50S ribosomal subunit. Contacts protein L32.

The polypeptide is Large ribosomal subunit protein bL17 (Lactiplantibacillus plantarum (strain ATCC BAA-793 / NCIMB 8826 / WCFS1) (Lactobacillus plantarum)).